Here is a 252-residue protein sequence, read N- to C-terminus: Segregation and condensation protein A (252 aa).

Positions 117–136 are disordered; that stretch reads EREEERQNAFTKPPSDLSEF.

This sequence belongs to the ScpA family. In terms of assembly, component of a cohesin-like complex composed of ScpA, ScpB and the Smc homodimer, in which ScpA and ScpB bind to the head domain of Smc. The presence of the three proteins is required for the association of the complex with DNA.

Its subcellular location is the cytoplasm. Its function is as follows. Participates in chromosomal partition during cell division. May act via the formation of a condensin-like complex containing Smc and ScpB that pull DNA away from mid-cell into both cell halves. In Bacillus pumilus (strain SAFR-032), this protein is Segregation and condensation protein A.